The chain runs to 41 residues: Large ribosomal subunit protein bL36 (41 aa).

The protein belongs to the bacterial ribosomal protein bL36 family.

This Rickettsia massiliae (strain Mtu5) protein is Large ribosomal subunit protein bL36.